Here is a 238-residue protein sequence, read N- to C-terminus: LexA repressor (238 aa).

Residues 26 to 46 constitute a DNA-binding region (H-T-H motif); it reads FDEMKDALDLASKSGIHRLIT. Active-site for autocatalytic cleavage activity residues include serine 158 and lysine 196.

It belongs to the peptidase S24 family. In terms of assembly, homodimer.

The catalysed reaction is Hydrolysis of Ala-|-Gly bond in repressor LexA.. In terms of biological role, represses a number of genes involved in the response to DNA damage (SOS response), including recA and lexA. In the presence of single-stranded DNA, RecA interacts with LexA causing an autocatalytic cleavage which disrupts the DNA-binding part of LexA, leading to derepression of the SOS regulon and eventually DNA repair. This Rhizobium meliloti (strain 1021) (Ensifer meliloti) protein is LexA repressor.